We begin with the raw amino-acid sequence, 102 residues long: Thioredoxin (102 aa).

In terms of domain architecture, Thioredoxin spans 1-102 (MVKIISSENF…FLTNLINKHA (102 aa)). A disulfide bridge connects residues Cys28 and Cys31.

This sequence belongs to the thioredoxin family.

Participates in various redox reactions through the reversible oxidation of its active center dithiol to a disulfide and catalyzes dithiol-disulfide exchange reactions. The sequence is that of Thioredoxin (trxA) from Chlamydia pneumoniae (Chlamydophila pneumoniae).